A 426-amino-acid chain; its full sequence is DNA primase DnaG (426 aa).

The region spanning 171–245 is the Toprim domain; that stretch reads DTVILVEGRA…KVDFVARAPP (75 aa). Mg(2+)-binding residues include Glu-177, Asp-219, and Asp-221. The interval 407 to 426 is disordered; the sequence is KSEENIQESVSTGESAQTSP. A compositionally biased stretch (polar residues) spans 413 to 426; sequence QESVSTGESAQTSP.

This sequence belongs to the archaeal DnaG primase family. In terms of assembly, forms a ternary complex with MCM helicase and DNA. Component of the archaeal exosome complex. Mg(2+) is required as a cofactor.

It carries out the reaction ssDNA + n NTP = ssDNA/pppN(pN)n-1 hybrid + (n-1) diphosphate.. Functionally, RNA polymerase that catalyzes the synthesis of short RNA molecules used as primers for DNA polymerase during DNA replication. Also part of the exosome, which is a complex involved in RNA degradation. Acts as a poly(A)-binding protein that enhances the interaction between heteromeric, adenine-rich transcripts and the exosome. The chain is DNA primase DnaG from Thermofilum pendens (strain DSM 2475 / Hrk 5).